The chain runs to 535 residues: Triacylglyceride transporter MHAS_02168/C731_2106 (535 aa).

The Cytoplasmic segment spans residues 1 to 18; the sequence is MAFPQTPNRLIRPRRTSR. A helical transmembrane segment spans residues 19 to 39; the sequence is GIAISAGGLAVLLGALDTYVV. Topologically, residues 40–60 are periplasmic; the sequence is VSIVTDIMRDVGIAVNQIQRV. The helical transmembrane segment at 61-82 threads the bilayer; that stretch reads TPIITGYLLGYIAAMPLLGRAS. Residues 83 to 86 are Cytoplasmic-facing; sequence DRFG. Residues 87-107 traverse the membrane as a helical segment; that stretch reads RKLLIQISLAGFALGSVITAL. Residues 108–111 lie on the Periplasmic side of the membrane; sequence ATNL. Residues 112 to 136 traverse the membrane as a helical segment; sequence DVLVAGRVIQGAASGALLPVTLALA. The Cytoplasmic segment spans residues 137–145; sequence ADLWATHKR. Residues 146-167 form a helical membrane-spanning segment; sequence AAVLGGVGAAQELGAVLGPIYG. Residues 168 to 177 are Periplasmic-facing; that stretch reads IFVVWLFHHW. Residues 178 to 198 traverse the membrane as a helical segment; it reads QAVFWVNVPLALIAMVLIHIS. Residues 199-212 lie on the Cytoplasmic side of the membrane; it reads LPPRVRTEEPQRVD. The chain crosses the membrane as a helical span at residues 213–230; that stretch reads VTGGLLLALALGLATIGL. Residues 231–243 are Periplasmic-facing; that stretch reads YNAEPDGKQVLPE. A helical membrane pass occupies residues 244 to 263; it reads YGPPLIIGAVIAAVAFLVWE. Residues 264–278 lie on the Cytoplasmic side of the membrane; it reads RFARTRLLDPAGVRF. A helical transmembrane segment spans residues 279–300; that stretch reads RPFLIALLVSLVTGGALMVTLV. The Periplasmic portion of the chain corresponds to 301–320; sequence NVELFGQGVLGLDQDEAVFL. 2 consecutive transmembrane segments (helical) span residues 321-343 and 344-364; these read LARF…TRVG and DRAV…LIAQ. Topologically, residues 365 to 384 are periplasmic; the sequence is WPADVLESRHDLGFVSLPTL. Positions 373 to 382 are beta-hairpin; the sequence is RHDLGFVSLP. Residues 385–407 traverse the membrane as a helical segment; the sequence is DTDLAIAGFGLGLVIAPLTSAAL. Residues 408 to 415 lie on the Cytoplasmic side of the membrane; that stretch reads RVVPAAQH. The chain crosses the membrane as a helical span at residues 416 to 440; that stretch reads GIASAAVVVARMIGMLIGIAALSAW. Residues 441 to 487 are Periplasmic-facing; sequence GLYRFNQYLKEQLAALPPAPADFPGGQMAGQMMRLRTATVQAYVLQY. A helical transmembrane segment spans residues 488–507; sequence GEIFAITAGLCVFGAVLGLF. Topologically, residues 508–535 are cytoplasmic; the sequence is IAGRREHAEESADAVDGVSNARDRAPSA.

This sequence belongs to the major facilitator superfamily. P55 (TC 2.A.1.3.34) family.

It localises to the cell inner membrane. Functionally, in association with lipoprotein LprG transports triacylglycerides (TAG) across the inner cell membrane, probably transfering them to lipoprotein LprG in the periplasm. TAG probably regulates lipid metabolism and growth regulation and plays a structural role in the outer membrane. Mutagenesis and molecular modeling suggests TAG (and maybe other lipids) enters the central cavity of the P55 transporter from within the cell inner membrane via clefts on the cytoplasmic face of P55 between TM5-TM8 and TM2-TM11. From there the lipid is probably transferred to the hydrophobic cavity of LprG. The lprG-MHAS_02167/C731_2107 operon complements the vancomycin sensitivity of an M.smegmatis knockout of the same operon. Probably required with LprG for normal surface localization of lipoarabinomannan (LAM). The polypeptide is Triacylglyceride transporter MHAS_02168/C731_2106 (Mycolicibacterium hassiacum (strain DSM 44199 / CIP 105218 / JCM 12690 / 3849) (Mycobacterium hassiacum)).